The sequence spans 255 residues: Homeobox protein Hox-D4 (255 aa).

The disordered stretch occupies residues 31-128 (EQGADYYGGG…KQPPPGTALK (98 aa)). A compositionally biased stretch (pro residues) spans 94–109 (EPCPAPPAPPPAPLPG). The short motif at 133–138 (VYPWMK) is the Antp-type hexapeptide element. The segment at residues 154–213 (PKRSRTAYTRQQVLELEKEFHFNRYLTRRRRIEIAHTLCLSERQIKIWFQNRRMKWKKDH) is a DNA-binding region (homeobox). The segment at 212-255 (DHKLPNTKGRSSSSSSSSSCSSSVAPSQHLQPMAKDHHTDLTTL) is disordered. Low complexity predominate over residues 222–234 (SSSSSSSSSCSSS). A compositionally biased stretch (basic and acidic residues) spans 245–255 (AKDHHTDLTTL).

The protein belongs to the Antp homeobox family. Deformed subfamily. Forms a DNA-binding heterodimer with transcription factor PBX1.

It localises to the nucleus. Its function is as follows. Sequence-specific transcription factor which is part of a developmental regulatory system that provides cells with specific positional identities on the anterior-posterior axis. This chain is Homeobox protein Hox-D4 (HOXD4), found in Gorilla gorilla gorilla (Western lowland gorilla).